Consider the following 253-residue polypeptide: uncharacterized protein (253 aa).

The region spanning 30 to 236 is the BPL/LPL catalytic domain; it reads AQGRQVAQLW…AVDDDAALMA (207 aa).

This is an uncharacterized protein from Cupriavidus necator (strain ATCC 17699 / DSM 428 / KCTC 22496 / NCIMB 10442 / H16 / Stanier 337) (Ralstonia eutropha).